The following is a 185-amino-acid chain: MQGLLLSLSLLASAAVGVLASDDLKIDVTLPVECDRVTKKGDKINVHYKGTLKSNGEKFDSSYDRQSPFSFKLGAGMVIKGWDEGLVDMCIGEKRTLTIGPSYGYGDRNVGPIPAGSTLVFETELVGIEGVPKPESIVTKSATDAPESTASAKVVEKVASVAKQAAEVVETIIADTDDTQEHNEL.

Positions M1–A20 are cleaved as a signal peptide. The region spanning G41–E129 is the PPIase FKBP-type domain. Positions H182–L185 match the Prevents secretion from ER motif.

The protein belongs to the FKBP-type PPIase family. FKBP2 subfamily.

It localises to the endoplasmic reticulum. The enzyme catalyses [protein]-peptidylproline (omega=180) = [protein]-peptidylproline (omega=0). Its activity is regulated as follows. Inhibited by both FK506 and rapamycin. Functionally, PPIases accelerate the folding of proteins. It catalyzes the cis-trans isomerization of proline imidic peptide bonds in oligopeptides. The chain is FK506-binding protein 2 (FPR2) from Podospora anserina (Pleurage anserina).